Consider the following 325-residue polypeptide: UPF0164 protein TP_0856 (325 aa).

Residues 1–28 (MVHYKSVFYKSAALVCGFVLAGASVAIA) form the signal peptide.

This sequence belongs to the UPF0164 family.

The protein is UPF0164 protein TP_0856 of Treponema pallidum (strain Nichols).